The following is a 287-amino-acid chain: Glycine--tRNA ligase alpha subunit (287 aa).

It belongs to the class-II aminoacyl-tRNA synthetase family. Tetramer of two alpha and two beta subunits.

The protein localises to the cytoplasm. It catalyses the reaction tRNA(Gly) + glycine + ATP = glycyl-tRNA(Gly) + AMP + diphosphate. This is Glycine--tRNA ligase alpha subunit from Campylobacter curvus (strain 525.92).